A 353-amino-acid chain; its full sequence is Phospho-N-acetylmuramoyl-pentapeptide-transferase (353 aa).

Helical transmembrane passes span I13–L33, T66–I86, F88–F108, L130–F150, P162–S182, G193–T213, I229–Y249, V256–I276, I281–V301, and K330–L350.

This sequence belongs to the glycosyltransferase 4 family. MraY subfamily. Mg(2+) serves as cofactor.

Its subcellular location is the cell inner membrane. The catalysed reaction is UDP-N-acetyl-alpha-D-muramoyl-L-alanyl-gamma-D-glutamyl-meso-2,6-diaminopimeloyl-D-alanyl-D-alanine + di-trans,octa-cis-undecaprenyl phosphate = di-trans,octa-cis-undecaprenyl diphospho-N-acetyl-alpha-D-muramoyl-L-alanyl-D-glutamyl-meso-2,6-diaminopimeloyl-D-alanyl-D-alanine + UMP. The protein operates within cell wall biogenesis; peptidoglycan biosynthesis. Catalyzes the initial step of the lipid cycle reactions in the biosynthesis of the cell wall peptidoglycan: transfers peptidoglycan precursor phospho-MurNAc-pentapeptide from UDP-MurNAc-pentapeptide onto the lipid carrier undecaprenyl phosphate, yielding undecaprenyl-pyrophosphoryl-MurNAc-pentapeptide, known as lipid I. The sequence is that of Phospho-N-acetylmuramoyl-pentapeptide-transferase from Sulfurimonas denitrificans (strain ATCC 33889 / DSM 1251) (Thiomicrospira denitrificans (strain ATCC 33889 / DSM 1251)).